The primary structure comprises 409 residues: Tyrosine--tRNA ligase (409 aa).

Tyr-39 provides a ligand contact to L-tyrosine. The short motif at 44–53 is the 'HIGH' region element; the sequence is PTAPSLHVGS. Tyr-176 and Gln-180 together coordinate L-tyrosine. Positions 236–240 match the 'KMSKS' region motif; sequence KMGKT. Lys-239 provides a ligand contact to ATP. The S4 RNA-binding domain maps to 346 to 409; the sequence is IGIVDALVGL…KKKHGILRKA (64 aa).

It belongs to the class-I aminoacyl-tRNA synthetase family. TyrS type 1 subfamily. Homodimer.

Its subcellular location is the cytoplasm. It carries out the reaction tRNA(Tyr) + L-tyrosine + ATP = L-tyrosyl-tRNA(Tyr) + AMP + diphosphate + H(+). Catalyzes the attachment of tyrosine to tRNA(Tyr) in a two-step reaction: tyrosine is first activated by ATP to form Tyr-AMP and then transferred to the acceptor end of tRNA(Tyr). The polypeptide is Tyrosine--tRNA ligase (Novosphingobium aromaticivorans (strain ATCC 700278 / DSM 12444 / CCUG 56034 / CIP 105152 / NBRC 16084 / F199)).